Reading from the N-terminus, the 160-residue chain is Large ribosomal subunit protein eL14 (160 aa).

A disordered region spans residues 136 to 160; it reads SDGTPRILKKDRRERLRAEKAKAKK. Residues 146–160 show a composition bias toward basic and acidic residues; that stretch reads DRRERLRAEKAKAKK.

The protein belongs to the eukaryotic ribosomal protein eL14 family.

In Drosophila virilis (Fruit fly), this protein is Large ribosomal subunit protein eL14 (RpL14).